A 149-amino-acid polypeptide reads, in one-letter code: ER export of PMA1 protein 1 (149 aa).

The Lumenal portion of the chain corresponds to 1–6 (MNLYGY). The chain crosses the membrane as a helical; Signal-anchor for type II membrane protein span at residues 7–27 (FLLLIIVIAFIALLPLFSGIG). Residues 28-149 (TFKLTKPKSS…KKNEAYEGFV (122 aa)) are Cytoplasmic-facing.

As to quaternary structure, interacts with PMA1 and PSG1.

It localises to the endoplasmic reticulum membrane. It is found in the cytoplasmic vesicle. The protein localises to the COPI-coated vesicle membrane. The protein resides in the COPII-coated vesicle membrane. Its subcellular location is the golgi apparatus membrane. Specific cargo receptor protein for the plasma membrane ATPase PMA1 that acts with PSG1 to promote the transport and maturation of PMA1. EXP1 and PSG1 probably act sequentially to promote PMA1 sorting between the ER and the Golgi, with EXP1 promoting PMA1 export from the ER to the Golgi while PSG1 has a role in PMA1 maturation or quality control in the Golgi. This chain is ER export of PMA1 protein 1, found in Saccharomyces cerevisiae (strain ATCC 204508 / S288c) (Baker's yeast).